We begin with the raw amino-acid sequence, 150 residues long: CCAAT/enhancer-binding protein gamma (150 aa).

Residue Lys3 forms a Glycyl lysine isopeptide (Lys-Gly) (interchain with G-Cter in SUMO2) linkage. The interval 27 to 94 (GLQQVPQLVP…QKAQDTLQRV (68 aa)) is disordered. Positions 28–37 (LQQVPQLVPA) are enriched in low complexity. A compositionally biased stretch (basic and acidic residues) spans 56-72 (SPMDRNSDEYRQRRERN). The bZIP domain maps to 62–125 (SDEYRQRRER…SVLKDLFLEH (64 aa)). The interval 66-93 (RQRRERNNMAVKKSRLKSKQKAQDTLQR) is basic motif. Residues 97-118 (LKEENERLEAKIKLLTKELSVL) are leucine-zipper.

This sequence belongs to the bZIP family. C/EBP subfamily. Binds DNA as a dimer and can form stable heterodimers with CEBPA and CEBPB. Interacts with ZNF638; this interaction increases transcriptional activation.

The protein localises to the nucleus. Functionally, transcription factor that binds to the promoter and the enhancer regions of target genes. Binds to the promoter and the enhancer of the alpha-1-fetoprotein gene. Binds to the enhancer element PRE-I (positive regulatory element-I) of the IL-4 gene. Binds to the promoter and the enhancer of the immunoglobulin heavy chain. Binds to GPE1, a cis-acting element in the G-CSF gene promoter. The polypeptide is CCAAT/enhancer-binding protein gamma (Cebpg) (Rattus norvegicus (Rat)).